Here is a 744-residue protein sequence, read N- to C-terminus: Zinc finger protein 366 (744 aa).

Residues 206-228 (KQPPEPLLPRKAEPQESEETKQK) form a disordered region. The segment covering 213–228 (LPRKAEPQESEETKQK) has biased composition (basic and acidic residues). 11 C2H2-type zinc fingers span residues 253–275 (WQCP…ILGH), 281–303 (HACT…MLTH), 309–331 (HKCQ…MMQH), 337–359 (HNCR…EAKH), 365–387 (NICV…LTTH), 393–415 (YNCS…MMKH), 421–443 (YICS…SLTH), 449–471 (HKCG…VLIH), 477–499 (YQCH…MIVH), 505–527 (FKCK…MHLH), and 533–556 (FKCL…KVKH). Residues 455–744 (GREFTLLANM…MEKQAVLLGI (290 aa)) form an interaction with NRIP1 region. The PXDLS signature appears at 590–594 (PFDLS). 2 disordered regions span residues 603-627 (VFQS…NCYE) and 664-692 (KEEK…QERD).

Interacts with ESR1 and NRIP1. Interacts (via PXDLS motif) with CTBP1. As to expression, expressed in immature and mature dendritic cells (DCs). Not detected in other blood cell types.

It localises to the nucleus. In terms of biological role, has transcriptional repression activity. Acts as a corepressor of ESR1; the function seems to involve CTBP1 and histone deacetylases. The sequence is that of Zinc finger protein 366 from Homo sapiens (Human).